The primary structure comprises 635 residues: Membrane protein insertase YidC (635 aa).

The chain crosses the membrane as a helical span at residues 8–28 (LILAMVLSALVMLVWSIFFAP). Residues 33-61 (PAQDTPAASTQGTAQPEAGGPATPGAVPQ) are disordered. Helical transmembrane passes span 396-416 (MIGN…LLVF), 470-490 (LPVL…FVTI), 528-548 (SFLH…SMWM), and 564-584 (IFAW…SGLV). A disordered region spans residues 615–635 (IRSSLPSRAKAGDKGGDKGGK). Positions 624–635 (KAGDKGGDKGGK) are enriched in basic and acidic residues.

The protein belongs to the OXA1/ALB3/YidC family. Type 1 subfamily. As to quaternary structure, interacts with the Sec translocase complex via SecD. Specifically interacts with transmembrane segments of nascent integral membrane proteins during membrane integration.

Its subcellular location is the cell inner membrane. Its function is as follows. Required for the insertion and/or proper folding and/or complex formation of integral membrane proteins into the membrane. Involved in integration of membrane proteins that insert both dependently and independently of the Sec translocase complex, as well as at least some lipoproteins. Aids folding of multispanning membrane proteins. The polypeptide is Membrane protein insertase YidC (Paracoccus denitrificans (strain Pd 1222)).